The sequence spans 297 residues: Homeobox protein HMX3 (297 aa).

Disordered stretches follow at residues 24 to 43 and 96 to 172; these read NSDS…KAGL and AAQK…RKKK. Composition is skewed to basic and acidic residues over residues 109 to 123 and 145 to 166; these read TDRD…SDPD and EDGK…ADKK. The segment at residues 170 to 229 is a DNA-binding region (homeobox); that stretch reads KKKTRTVFSRSQVFQLESTFDMKRYLSSSERAGLAASLHLTETQVKIWFQNRRNKWKRQL.

The protein belongs to the HMX homeobox family. As to expression, expressed in the ear placode and vesicle and in cells forming the vestibulo-acoustic ganglion. Also expressed in the lateral line.

It localises to the nucleus. Functionally, transcription factor involved in specification of neuronal cell types and which is required for inner ear and hypothalamus development. Binds to the 5'-CAAGTG-3' core sequence. The polypeptide is Homeobox protein HMX3 (hmx3) (Danio rerio (Zebrafish)).